Here is a 180-residue protein sequence, read N- to C-terminus: MSELSIYSEQGGEPVFSTLDSARIQHELSLRGIAFDRCASKAEIALDADQADILSTYAEEIHRIQALGDYPTVDAIRMKPDHPDRQALRQKFLSEHTHAEDEVRLFVEGRGLFCLHIKSEVLQVTCETNDWISVPAGTRHWFDMGEKPYFCAIRFFNNPNGWVANFTNDPIAERFSKLRD.

Residues histidine 96, histidine 98, glutamate 102, and histidine 140 each coordinate Fe(2+). Residues histidine 96, histidine 98, glutamate 102, and histidine 140 each contribute to the Ni(2+) site.

It belongs to the acireductone dioxygenase (ARD) family. In terms of assembly, monomer. It depends on Fe(2+) as a cofactor. The cofactor is Ni(2+).

The enzyme catalyses 1,2-dihydroxy-5-(methylsulfanyl)pent-1-en-3-one + O2 = 3-(methylsulfanyl)propanoate + CO + formate + 2 H(+). The catalysed reaction is 1,2-dihydroxy-5-(methylsulfanyl)pent-1-en-3-one + O2 = 4-methylsulfanyl-2-oxobutanoate + formate + 2 H(+). It participates in amino-acid biosynthesis; L-methionine biosynthesis via salvage pathway; L-methionine from S-methyl-5-thio-alpha-D-ribose 1-phosphate: step 5/6. Catalyzes 2 different reactions between oxygen and the acireductone 1,2-dihydroxy-3-keto-5-methylthiopentene (DHK-MTPene) depending upon the metal bound in the active site. Fe-containing acireductone dioxygenase (Fe-ARD) produces formate and 2-keto-4-methylthiobutyrate (KMTB), the alpha-ketoacid precursor of methionine in the methionine recycle pathway. Ni-containing acireductone dioxygenase (Ni-ARD) produces methylthiopropionate, carbon monoxide and formate, and does not lie on the methionine recycle pathway. The protein is Acireductone dioxygenase of Synechococcus sp. (strain WH7803).